We begin with the raw amino-acid sequence, 208 residues long: Glycerol-3-phosphate acyltransferase (208 aa).

The next 5 helical transmembrane spans lie at 3–23, 55–75, 81–101, 113–133, and 155–175; these read IIIM…VIIG, IVMV…TLLF, YTLL…YIGF, ILLA…LLLV, and IFYY…LFIF.

Belongs to the PlsY family. As to quaternary structure, probably interacts with PlsX.

Its subcellular location is the cell membrane. The enzyme catalyses an acyl phosphate + sn-glycerol 3-phosphate = a 1-acyl-sn-glycero-3-phosphate + phosphate. Its pathway is lipid metabolism; phospholipid metabolism. Catalyzes the transfer of an acyl group from acyl-phosphate (acyl-PO(4)) to glycerol-3-phosphate (G3P) to form lysophosphatidic acid (LPA). This enzyme utilizes acyl-phosphate as fatty acyl donor, but not acyl-CoA or acyl-ACP. This chain is Glycerol-3-phosphate acyltransferase, found in Lactiplantibacillus plantarum (strain ATCC BAA-793 / NCIMB 8826 / WCFS1) (Lactobacillus plantarum).